A 214-amino-acid chain; its full sequence is Small ribosomal subunit protein uS2 (214 aa).

Belongs to the universal ribosomal protein uS2 family.

This Methanococcoides burtonii (strain DSM 6242 / NBRC 107633 / OCM 468 / ACE-M) protein is Small ribosomal subunit protein uS2.